The sequence spans 384 residues: Alanine racemase (384 aa).

The Proton acceptor; specific for D-alanine role is filled by Lys-46. The residue at position 46 (Lys-46) is an N6-(pyridoxal phosphate)lysine. Arg-144 serves as a coordination point for substrate. Tyr-278 (proton acceptor; specific for L-alanine) is an active-site residue. Met-326 is a binding site for substrate.

The protein belongs to the alanine racemase family. Pyridoxal 5'-phosphate is required as a cofactor.

It catalyses the reaction L-alanine = D-alanine. It functions in the pathway amino-acid biosynthesis; D-alanine biosynthesis; D-alanine from L-alanine: step 1/1. Catalyzes the interconversion of L-alanine and D-alanine. May also act on other amino acids. In Frankia casuarinae (strain DSM 45818 / CECT 9043 / HFP020203 / CcI3), this protein is Alanine racemase (alr).